Consider the following 307-residue polypeptide: GTPase Era (307 aa).

One can recognise an Era-type G domain in the interval Arg7–Lys181. Residues Gly15–Ser22 form a G1 region. Residue Gly15 to Ser22 coordinates GTP. The segment at Gln41–Asn45 is G2. The tract at residues Asp62 to Gly65 is G3. GTP-binding positions include Asp62 to Leu66 and Asn130 to Asp133. The tract at residues Asn130–Asp133 is G4. The interval Ile160–Ala162 is G5. Residues Leu212–Glu290 form the KH type-2 domain.

This sequence belongs to the TRAFAC class TrmE-Era-EngA-EngB-Septin-like GTPase superfamily. Era GTPase family. In terms of assembly, monomer.

It is found in the cytoplasm. The protein localises to the cell inner membrane. Its function is as follows. An essential GTPase that binds both GDP and GTP, with rapid nucleotide exchange. Plays a role in 16S rRNA processing and 30S ribosomal subunit biogenesis and possibly also in cell cycle regulation and energy metabolism. This Desulfovibrio desulfuricans (strain ATCC 27774 / DSM 6949 / MB) protein is GTPase Era.